The following is a 156-amino-acid chain: Small ribosomal subunit protein uS7 (156 aa).

This sequence belongs to the universal ribosomal protein uS7 family. In terms of assembly, part of the 30S ribosomal subunit. Contacts proteins S9 and S11.

Its function is as follows. One of the primary rRNA binding proteins, it binds directly to 16S rRNA where it nucleates assembly of the head domain of the 30S subunit. Is located at the subunit interface close to the decoding center, probably blocks exit of the E-site tRNA. The protein is Small ribosomal subunit protein uS7 of Renibacterium salmoninarum (strain ATCC 33209 / DSM 20767 / JCM 11484 / NBRC 15589 / NCIMB 2235).